Reading from the N-terminus, the 1883-residue chain is Lysophospholipase NTE1 (1883 aa).

The Cytoplasmic segment spans residues 1–75 (MSQVPVASPA…LLRVVLASLN (75 aa)). Residues 76–96 (LIRILATFSTITVPSLVYAIL) traverse the membrane as a helical segment. Residues 97–103 (HYSLTLQ) are Lumenal-facing. Residues 104–124 (LNFPSLALLFLTSLISAFIWL) traverse the membrane as a helical segment. At 125–1883 (RYRHLNKYER…AGISARRNSI (1759 aa)) the chain is on the cytoplasmic side. 6 disordered regions span residues 284 to 327 (HLAP…FNPP), 355 to 410 (ERLG…LYHA), 618 to 693 (SQRS…MVGP), 716 to 764 (SAQP…RKGS), 921 to 1069 (EEDR…ATNS), and 1084 to 1108 (LHQQ…GKRS). Residues 311–327 (NNATAPTSPYSSAFNPP) are compositionally biased toward polar residues. Residues 372–383 (ARTASSGTASAT) show a composition bias toward low complexity. The segment covering 650–668 (PSLTTSSKQSNQKPTSSRI) has biased composition (polar residues). A nucleoside 3',5'-cyclic phosphate-binding positions include 863–1158 (AGHG…RRPI) and 1166–1285 (RLLS…IARR). The span at 936–948 (TDASSGSSRQNRP) shows a compositional bias: polar residues. The span at 964-974 (LLDERNLREAD) shows a compositional bias: basic and acidic residues. Composition is skewed to polar residues over residues 988-998 (ISSNGDGNSGS) and 1084-1100 (LHQQ…QSSQ). A PNPLA domain is found at 1544 to 1708 (LVLGGGGARG…VDNLPVTVML (165 aa)). The short motif at 1548-1553 (GGGARG) is the GXGXXG element. Positions 1575 to 1579 (GTSIG) match the GXSXG motif. Residue Ser1577 is the Nucleophile of the active site. Asp1695 functions as the Proton acceptor in the catalytic mechanism. Residues 1695–1697 (DGG) carry the DGA/G motif. The segment at 1852 to 1883 (DESGVGGGVRKIRKKRRRTRRKAGISARRNSI) is disordered. Residues 1861–1874 (RKIRKKRRRTRRKA) show a composition bias toward basic residues.

It belongs to the NTE family.

The protein resides in the endoplasmic reticulum membrane. It catalyses the reaction a 1-acyl-sn-glycero-3-phosphocholine + H2O = sn-glycerol 3-phosphocholine + a fatty acid + H(+). With respect to regulation, inhibited by organophosphorus esters. Intracellular phospholipase B that catalyzes the double deacylation of phosphatidylcholine (PC) to glycerophosphocholine (GroPCho). Plays an important role in membrane lipid homeostasis. Responsible for the rapid PC turnover in response to inositol, elevated temperatures, or when choline is present in the growth medium. The protein is Lysophospholipase NTE1 (NTE1) of Mycosarcoma maydis (Corn smut fungus).